Here is a 417-residue protein sequence, read N- to C-terminus: Serine hydroxymethyltransferase (417 aa).

Residues Leu-121 and 125 to 127 (GHL) each bind (6S)-5,6,7,8-tetrahydrofolate. Position 229 is an N6-(pyridoxal phosphate)lysine (Lys-229). 355 to 357 (SPF) serves as a coordination point for (6S)-5,6,7,8-tetrahydrofolate.

It belongs to the SHMT family. In terms of assembly, homodimer. It depends on pyridoxal 5'-phosphate as a cofactor.

The protein localises to the cytoplasm. It catalyses the reaction (6R)-5,10-methylene-5,6,7,8-tetrahydrofolate + glycine + H2O = (6S)-5,6,7,8-tetrahydrofolate + L-serine. It functions in the pathway one-carbon metabolism; tetrahydrofolate interconversion. The protein operates within amino-acid biosynthesis; glycine biosynthesis; glycine from L-serine: step 1/1. Its function is as follows. Catalyzes the reversible interconversion of serine and glycine with tetrahydrofolate (THF) serving as the one-carbon carrier. This reaction serves as the major source of one-carbon groups required for the biosynthesis of purines, thymidylate, methionine, and other important biomolecules. Also exhibits THF-independent aldolase activity toward beta-hydroxyamino acids, producing glycine and aldehydes, via a retro-aldol mechanism. The chain is Serine hydroxymethyltransferase from Yersinia pestis bv. Antiqua (strain Antiqua).